We begin with the raw amino-acid sequence, 318 residues long: Acetaldehyde dehydrogenase 2 (318 aa).

9–12 contributes to the NAD(+) binding site; sequence SGNI. Cysteine 129 functions as the Acyl-thioester intermediate in the catalytic mechanism. NAD(+)-binding positions include 160–168 and asparagine 288; that span reads SAGPGTRAN.

This sequence belongs to the acetaldehyde dehydrogenase family.

It catalyses the reaction acetaldehyde + NAD(+) + CoA = acetyl-CoA + NADH + H(+). The sequence is that of Acetaldehyde dehydrogenase 2 from Mycolicibacterium vanbaalenii (strain DSM 7251 / JCM 13017 / BCRC 16820 / KCTC 9966 / NRRL B-24157 / PYR-1) (Mycobacterium vanbaalenii).